The chain runs to 237 residues: tRNA (guanine-N(7)-)-methyltransferase (237 aa).

S-adenosyl-L-methionine is bound by residues glutamate 67, glutamate 92, aspartate 119, and aspartate 141. The active site involves aspartate 141. Substrate contacts are provided by residues lysine 145, aspartate 177, and 214–217 (TRYE).

It belongs to the class I-like SAM-binding methyltransferase superfamily. TrmB family.

It carries out the reaction guanosine(46) in tRNA + S-adenosyl-L-methionine = N(7)-methylguanosine(46) in tRNA + S-adenosyl-L-homocysteine. The protein operates within tRNA modification; N(7)-methylguanine-tRNA biosynthesis. Its function is as follows. Catalyzes the formation of N(7)-methylguanine at position 46 (m7G46) in tRNA. The polypeptide is tRNA (guanine-N(7)-)-methyltransferase (Ruegeria pomeroyi (strain ATCC 700808 / DSM 15171 / DSS-3) (Silicibacter pomeroyi)).